Reading from the N-terminus, the 432-residue chain is Adenylosuccinate synthetase (432 aa).

GTP is bound by residues 13–19 and 41–43; these read GDEGKGK and GHT. D14 functions as the Proton acceptor in the catalytic mechanism. Residues D14 and G41 each coordinate Mg(2+). IMP-binding positions include 14-17, 39-42, T130, R144, Q225, T240, and R304; these read DEGK and NAGH. The active-site Proton donor is H42. 300–306 contributes to the substrate binding site; sequence AVTGRPR. GTP contacts are provided by residues R306, 332–334, and 415–417; these read KLD and STG.

It belongs to the adenylosuccinate synthetase family. Homodimer. Mg(2+) serves as cofactor.

It is found in the cytoplasm. It catalyses the reaction IMP + L-aspartate + GTP = N(6)-(1,2-dicarboxyethyl)-AMP + GDP + phosphate + 2 H(+). The protein operates within purine metabolism; AMP biosynthesis via de novo pathway; AMP from IMP: step 1/2. In terms of biological role, plays an important role in the de novo pathway of purine nucleotide biosynthesis. Catalyzes the first committed step in the biosynthesis of AMP from IMP. In Actinobacillus pleuropneumoniae serotype 7 (strain AP76), this protein is Adenylosuccinate synthetase.